Reading from the N-terminus, the 178-residue chain is ATP-dependent protease subunit HslV (178 aa).

Thr-7 is an active-site residue. Gly-162, Cys-165, and Thr-168 together coordinate Na(+).

Belongs to the peptidase T1B family. HslV subfamily. In terms of assembly, a double ring-shaped homohexamer of HslV is capped on each side by a ring-shaped HslU homohexamer. The assembly of the HslU/HslV complex is dependent on binding of ATP.

It is found in the cytoplasm. It catalyses the reaction ATP-dependent cleavage of peptide bonds with broad specificity.. Its activity is regulated as follows. Allosterically activated by HslU binding. In terms of biological role, protease subunit of a proteasome-like degradation complex believed to be a general protein degrading machinery. The polypeptide is ATP-dependent protease subunit HslV (Burkholderia ambifaria (strain ATCC BAA-244 / DSM 16087 / CCUG 44356 / LMG 19182 / AMMD) (Burkholderia cepacia (strain AMMD))).